The sequence spans 201 residues: Small ribosomal subunit protein uS4 (201 aa).

In terms of domain architecture, S4 RNA-binding spans 91-157; the sequence is SRLDNVVYRA…VPFQIARETA (67 aa).

The protein belongs to the universal ribosomal protein uS4 family. In terms of assembly, part of the 30S ribosomal subunit. Contacts protein S5. The interaction surface between S4 and S5 is involved in control of translational fidelity.

One of the primary rRNA binding proteins, it binds directly to 16S rRNA where it nucleates assembly of the body of the 30S subunit. In terms of biological role, with S5 and S12 plays an important role in translational accuracy. This Mycolicibacterium paratuberculosis (strain ATCC BAA-968 / K-10) (Mycobacterium paratuberculosis) protein is Small ribosomal subunit protein uS4.